Consider the following 751-residue polypeptide: Lanosterol synthase erg7A (751 aa).

The interval 1–22 (MTGGPIASWRTAAQGHLTPDEN) is disordered. The PFTB 1 repeat unit spans residues 147–189 (ATEIKRYLFARQHPEDGGWGLHIEAHSSVFGTCMNYVALRLIG). The Proton donor role is filled by aspartate 481. 3 PFTB repeats span residues 508–553 (LKDS…MIGY), 585–625 (KDKA…ASVG), and 634–675 (ARRG…VQTA).

It belongs to the terpene cyclase/mutase family.

The protein resides in the lipid droplet. Its subcellular location is the endoplasmic reticulum membrane. The enzyme catalyses (S)-2,3-epoxysqualene = lanosterol. Its pathway is steroid metabolism; ergosterol biosynthesis. In terms of biological role, lanosterol synthase; part of the third module of ergosterol biosynthesis pathway that includes the late steps of the pathway. ERG7A and ERG7B catalyze the cyclization of (S)-2,3 oxidosqualene to lanosterol, a reaction that forms the sterol core. The third module or late pathway involves the ergosterol synthesis itself through consecutive reactions that mainly occur in the endoplasmic reticulum (ER) membrane. Firstly, the squalene synthase erg9 catalyzes the condensation of 2 farnesyl pyrophosphate moieties to form squalene, which is the precursor of all steroids. Squalene synthase is crucial for balancing the incorporation of farnesyl diphosphate (FPP) into sterol and nonsterol isoprene synthesis. Secondly, squalene is converted into lanosterol by the consecutive action of the squalene epoxidase erg1 and the lanosterol synthase erg7. Then, the delta(24)-sterol C-methyltransferase erg6 methylates lanosterol at C-24 to produce eburicol. Eburicol is the substrate of the sterol 14-alpha demethylase encoded by cyp51A and cyp51B, to yield 4,4,24-trimethyl ergosta-8,14,24(28)-trienol. The C-14 reductase erg24 then reduces the C14=C15 double bond which leads to 4,4-dimethylfecosterol. A sequence of further demethylations at C-4, involving the C-4 demethylation complex containing the C-4 methylsterol oxidases erg25A or erg25B, the sterol-4-alpha-carboxylate 3-dehydrogenase erg26 and the 3-keto-steroid reductase erg27, leads to the production of fecosterol via 4-methylfecosterol. The C-8 sterol isomerase erg2 then catalyzes the reaction which results in unsaturation at C-7 in the B ring of sterols and thus converts fecosterol to episterol. The sterol-C5-desaturase erg3B then catalyzes the introduction of a C-5 double bond in the B ring to produce 5-dehydroepisterol. The 2 other sterol-C5-desaturases, erg3A and erg3C, seem to be less important in ergosterol biosynthesis. The C-22 sterol desaturase erg5 further converts 5-dehydroepisterol into ergosta-5,7,22,24(28)-tetraen-3beta-ol by forming the C-22(23) double bond in the sterol side chain. Finally, ergosta-5,7,22,24(28)-tetraen-3beta-ol is substrate of the C-24(28) sterol reductases erg4A and erg4B to produce ergosterol. Possible alternative sterol biosynthetic pathways might exist from fecosterol to ergosterol, depending on the activities of the erg3 isoforms. This Aspergillus fumigatus (strain ATCC MYA-4609 / CBS 101355 / FGSC A1100 / Af293) (Neosartorya fumigata) protein is Lanosterol synthase erg7A.